A 167-amino-acid polypeptide reads, in one-letter code: Endoribonuclease YbeY (167 aa).

The Zn(2+) site is built by histidine 131, histidine 135, and histidine 141.

It belongs to the endoribonuclease YbeY family. It depends on Zn(2+) as a cofactor.

Its subcellular location is the cytoplasm. Single strand-specific metallo-endoribonuclease involved in late-stage 70S ribosome quality control and in maturation of the 3' terminus of the 16S rRNA. This is Endoribonuclease YbeY from Rickettsia akari (strain Hartford).